A 1564-amino-acid chain; its full sequence is Tetratricopeptide repeat protein 37 (1564 aa).

TPR repeat units lie at residues 6 to 39, 40 to 73, 75 to 110, 116 to 149, 237 to 271, 306 to 339, 420 to 453, 456 to 492, 493 to 527, 564 to 597, 598 to 631, 633 to 665, 678 to 713, 743 to 776, 861 to 894, 980 to 1013, 1020 to 1050, 1051 to 1084, and 1400 to 1433; these read VKAILKNARDAIRNKDYKEVLKQCKAVLKLEKNN, YNAWVFIGLAASELEQPDQAQAAYRKAVEIEPDQ, LAWQGLGNLYEKVNQKDFKEDLPNVYQKLLELYRSS, YEICKKLSDLYQQEKNYVPAAHTWHQLIKMKEDE, IYPLKVLALHYIKSGDITEEAICCYSKLLELDPLN, PSAWCCLAQAQLKIHKYAEALVSCDQAINGATQD, AEGHFLEGLLQYIQKNYSAAEISLQYALERKPEN, YHYYLGLNYWFMSKETRRDKTKAVTQFLKAAKMDPFM, SRAFYYLGHYYSEVAGDKSRARGCYKKAFELDDSD, KWAWLRRGLFYLRVGQHSKSVSDLHAALRADPKD, SNCWECLGEAYLSRGGYTTALKSFMKASELNPDS, YSVYKIASIKQILGTYKEAVNEYQQILMKSGEY, MLAKSALSDFLDLKAVDAIEKAIEFLARAIRLRPDL, LLGNDEEQQLLNKPEVLALGGRCYGRALRIQSTA, VAAWTNLGALYLMNGNIELSHQAFKVAQSLDPLY, RTAFEMLGYLNEHLNLKKQASESYRRVVSILQER, NSALQHYGRSLCAVGQYQEAIQTFSSTPLTE, FDDLTGIALAFFKKGLLQESMKAYKQALSVAKSD, and HNAWHWLAEVYQSLGMMMDAEMCYRKSLQLASQQ.

The protein is Tetratricopeptide repeat protein 37 (ttc37) of Xenopus laevis (African clawed frog).